Here is a 620-residue protein sequence, read N- to C-terminus: Sterile alpha motif domain-containing protein 15 (620 aa).

The segment at 1 to 394 (MSEVSGDYNS…PNYPAGKDKL (394 aa)) is disordered. 3 stretches are compositionally biased toward basic and acidic residues: residues 62–83 (TRTRKGDLVPVGKNHEVPDLQR), 106–125 (IDPEQKTPDIRSEKLRKSVE), and 135–180 (TKSE…HFKS). A compositionally biased stretch (polar residues) spans 181–191 (TEQSGTEQPEQ). The segment covering 233 to 242 (RPLKASKKAQ) has biased composition (basic residues). Residues 261-270 (LLDDQEETQE) show a composition bias toward acidic residues. Composition is skewed to basic and acidic residues over residues 271–286 (ESIKEKVPEPLGDRKP), 295–315 (KSSERSKLKDTLIEPSKDKDP), 323–337 (FPKEKLIKTTEKTGD), and 347–382 (IQEKSQPEPTEKNLELPNKPKPEEERDLPKEDKPES). An SAM domain is found at 480 to 543 (WSPERVAEWI…SYHTRVLLGI (64 aa)). Over residues 594 to 604 (EIKAEEKKEDA) the composition is skewed to basic and acidic residues. Residues 594–620 (EIKAEEKKEDALPENSLEENEELYEAT) are disordered. Acidic residues predominate over residues 609–620 (SLEENEELYEAT).

This chain is Sterile alpha motif domain-containing protein 15 (Samd15), found in Mus musculus (Mouse).